The sequence spans 205 residues: Putative epidermin response regulator (205 aa).

The ompR/PhoB-type DNA-binding region spans 103-200 (KYIKYVNDDF…ERKLGYKILI (98 aa)).

It to the C-terminus of E.coli phosphate regulon transcriptional regulatory protein PhoB.

In Staphylococcus epidermidis, this protein is Putative epidermin response regulator (epiQ).